We begin with the raw amino-acid sequence, 257 residues long: Isoprenyl transferase (257 aa).

D33 is a catalytic residue. Mg(2+) is bound at residue D33. Substrate-binding positions include 34-37 (GNGR), W38, R46, H50, and 78-80 (STE). The active-site Proton acceptor is N81. Substrate is bound by residues W82, R84, R204, and 210–212 (RLS). Residue E223 participates in Mg(2+) binding.

The protein belongs to the UPP synthase family. As to quaternary structure, homodimer. It depends on Mg(2+) as a cofactor.

Catalyzes the condensation of isopentenyl diphosphate (IPP) with allylic pyrophosphates generating different type of terpenoids. The sequence is that of Isoprenyl transferase from Clostridium acetobutylicum (strain ATCC 824 / DSM 792 / JCM 1419 / IAM 19013 / LMG 5710 / NBRC 13948 / NRRL B-527 / VKM B-1787 / 2291 / W).